Here is a 273-residue protein sequence, read N- to C-terminus: Ribosomal RNA small subunit methyltransferase A (273 aa).

Positions 18, 20, 45, 66, 91, and 113 each coordinate S-adenosyl-L-methionine.

Belongs to the class I-like SAM-binding methyltransferase superfamily. rRNA adenine N(6)-methyltransferase family. RsmA subfamily.

The protein localises to the cytoplasm. The catalysed reaction is adenosine(1518)/adenosine(1519) in 16S rRNA + 4 S-adenosyl-L-methionine = N(6)-dimethyladenosine(1518)/N(6)-dimethyladenosine(1519) in 16S rRNA + 4 S-adenosyl-L-homocysteine + 4 H(+). Its function is as follows. Specifically dimethylates two adjacent adenosines (A1518 and A1519) in the loop of a conserved hairpin near the 3'-end of 16S rRNA in the 30S particle. May play a critical role in biogenesis of 30S subunits. This Escherichia coli O157:H7 protein is Ribosomal RNA small subunit methyltransferase A.